A 182-amino-acid chain; its full sequence is UPF0397 protein llmg_0343 (182 aa).

5 consecutive transmembrane segments (helical) span residues 8-28, 42-62, 74-94, 114-134, and 146-166; these read IVVA…LINI, AVLA…IGFI, APWW…GFGV, IVQF…GDIL, and QGVV…TLLL.

It belongs to the UPF0397 family.

Its subcellular location is the cell membrane. The chain is UPF0397 protein llmg_0343 from Lactococcus lactis subsp. cremoris (strain MG1363).